A 332-amino-acid polypeptide reads, in one-letter code: DNA-directed RNA polymerase subunit alpha (332 aa).

The interval 2–234 (TVTANQVLRP…DQLSVFGDFT (233 aa)) is alpha N-terminal domain (alpha-NTD). The interval 248-332 (VDPVLLRPID…AGVAQHGMLG (85 aa)) is alpha C-terminal domain (alpha-CTD).

It belongs to the RNA polymerase alpha chain family. In terms of assembly, homodimer. The RNAP catalytic core consists of 2 alpha, 1 beta, 1 beta' and 1 omega subunit. When a sigma factor is associated with the core the holoenzyme is formed, which can initiate transcription.

It catalyses the reaction RNA(n) + a ribonucleoside 5'-triphosphate = RNA(n+1) + diphosphate. In terms of biological role, DNA-dependent RNA polymerase catalyzes the transcription of DNA into RNA using the four ribonucleoside triphosphates as substrates. The chain is DNA-directed RNA polymerase subunit alpha from Xanthomonas axonopodis pv. citri (strain 306).